A 146-amino-acid polypeptide reads, in one-letter code: BCL7-like protein (146 aa).

Residues M59 to P146 form a disordered region. Composition is skewed to polar residues over residues N75–T90 and D113–S134. The segment covering S135–P146 has biased composition (basic and acidic residues).

The protein belongs to the BCL7 family. Ubiquitous.

It localises to the nucleus. Its function is as follows. Required for the terminal differentiation of seam cells, and the differentiation of distal tip cells important for normal somatic gonad and germ cell development. Plays a role in the Wnt signaling pathway, regulating the expression of beta-catenin homologs wrm-1, bar-1 and sys-1, and the localization of wrm-1 and the wnt signaling pathway component pop-1 during asymmetric cell division of seam cells and the Z-cell lineage of the somatic gonad, respectively. May have a pro-apoptotic role, possibly linked to the negative regulation of expression of anti-apoptotic factor ced-9. The sequence is that of BCL7-like protein from Caenorhabditis elegans.